The following is a 174-amino-acid chain: Protein VdlD (174 aa).

The 113-residue stretch at D20–G132 folds into the HotDog ACOT-type domain.

It belongs to the acyl coenzyme A hydrolase family.

This is Protein VdlD (vdlD) from Helicobacter pylori (strain J99 / ATCC 700824) (Campylobacter pylori J99).